A 489-amino-acid polypeptide reads, in one-letter code: Probable cytosol aminopeptidase (489 aa).

Mn(2+) is bound by residues Lys-260 and Asp-265. Residue Lys-272 is part of the active site. 3 residues coordinate Mn(2+): Asp-283, Asp-342, and Glu-344. Residue Arg-346 is part of the active site.

Belongs to the peptidase M17 family. Mn(2+) serves as cofactor.

The protein localises to the cytoplasm. The catalysed reaction is Release of an N-terminal amino acid, Xaa-|-Yaa-, in which Xaa is preferably Leu, but may be other amino acids including Pro although not Arg or Lys, and Yaa may be Pro. Amino acid amides and methyl esters are also readily hydrolyzed, but rates on arylamides are exceedingly low.. It catalyses the reaction Release of an N-terminal amino acid, preferentially leucine, but not glutamic or aspartic acids.. Its function is as follows. Presumably involved in the processing and regular turnover of intracellular proteins. Catalyzes the removal of unsubstituted N-terminal amino acids from various peptides. The protein is Probable cytosol aminopeptidase of Alcanivorax borkumensis (strain ATCC 700651 / DSM 11573 / NCIMB 13689 / SK2).